We begin with the raw amino-acid sequence, 645 residues long: Rab11 family-interacting protein 1 (645 aa).

Positions 1–128 (MSLAASAGRG…DQGRRKKQWY (128 aa)) constitute a C2 domain. A compositionally biased stretch (basic and acidic residues) spans 171-187 (PFGKLKDKIKGKNKDSA). The segment at 171–215 (PFGKLKDKIKGKNKDSASDTASAIVPSVTPSVDSDDESFSKDKKK) is disordered. Serine 186, serine 204, serine 208, and serine 236 each carry phosphoserine. Residues 259 to 296 (WDDDAHEDESSSASDVMSHKRTSSTDQQPNQSNFSLPK) are disordered. Residues 282 to 293 (STDQQPNQSNFS) show a composition bias toward polar residues. 9 positions are modified to phosphoserine: serine 301, serine 316, serine 340, serine 342, serine 344, serine 346, serine 357, serine 358, and serine 383. The disordered stretch occupies residues 330-545 (PEARSEIRES…PRPHPVKPMN (216 aa)). Basic and acidic residues-rich tracts occupy residues 378–391 (SDRR…KDSM) and 418–432 (AARE…ESKK). Serine 434 carries the phosphoserine modification. Basic and acidic residues predominate over residues 459 to 487 (SEKEKERKGALVEAQLREEDLMRRPEKDA). Residues 573–635 (KKYQPSDPAF…EETPNILRVP (63 aa)) form the FIP-RBD domain. Residues 581 to 645 (AFAYAQLTHD…AQMGKKAGKM (65 aa)) form a necessary for interaction with RAB4A and RAB11A, subcellular location and endosomal recycling region.

Homooligomer. Interacts with RAB11A, RAB11B, RAB25, RAB4A and RAB14.

The protein localises to the recycling endosome. It is found in the cytoplasmic vesicle. Its function is as follows. A Rab11 effector protein involved in the endosomal recycling process. Also involved in controlling membrane trafficking along the phagocytic pathway and in phagocytosis. Interaction with RAB14 may function in the process of neurite formation. This chain is Rab11 family-interacting protein 1 (Rab11fip1), found in Mus musculus (Mouse).